A 341-amino-acid chain; its full sequence is Serine/threonine-protein kinase-like protein At5g23170 (341 aa).

The region spanning 16-298 is the Protein kinase domain; sequence FSPSKLIGKG…FGEITAEIVA (283 aa). Residues 22–30 and K51 each bind ATP; that span reads IGKGSHGYV. The tract at residues 52–75 is disordered; the sequence is TPSSLSPSSPSSSSSSKSEQTKKL. Positions 53–69 are enriched in low complexity; sequence PSSLSPSSPSSSSSSKS. D153 acts as the Proton acceptor in catalysis. Residues 311-332 adopt a coiled-coil conformation; it reads MSVLRRVVKLKRRKKRLRETLT.

It belongs to the protein kinase superfamily. Ser/Thr protein kinase family. In terms of tissue distribution, ubiquitous. Higher expression in mature stamina and pollen.

It catalyses the reaction L-seryl-[protein] + ATP = O-phospho-L-seryl-[protein] + ADP + H(+). It carries out the reaction L-threonyl-[protein] + ATP = O-phospho-L-threonyl-[protein] + ADP + H(+). The polypeptide is Serine/threonine-protein kinase-like protein At5g23170 (Arabidopsis thaliana (Mouse-ear cress)).